Here is a 170-residue protein sequence, read N- to C-terminus: Cathelicidin antimicrobial peptide (170 aa).

Residues 1–30 (MKTQRDGPSLGRWSLLLLLLGLTMPLAVIG) form the signal peptide. Positions 31 to 131 (RVLSYQEAVL…DISCDKDKRK (101 aa)) are cleaved as a propeptide — cathelin-like domain (CLD). The interval 31–131 (RVLSYQEAVL…DISCDKDKRK (101 aa)) is cathelin-like domain (CLD). Intrachain disulfides connect C86–C97 and C108–C125. Positions 150–162 (LKKIGQKIKDFFG) are active core.

This sequence belongs to the cathelicidin family. Monomer, homodimer or homotrimer (in vitro). Oligomerizes as tetra- or hexamer in solution (in vitro). In terms of processing, proteolytically cleaved by proteinase PRTN3 into antibacterial peptide LL-37. Proteolytically cleaved by cathepsin CTSG and neutrophil elastase ELANE. Resistant to proteolytic degradation in solution, and when bound to both zwitterionic (mimicking mammalian membranes) and negatively charged membranes (mimicking bacterial membranes). Post-translationally, after secretion onto the skin surface, the CAMP gene product is processed by a serine protease-dependent mechanism into multiple novel antimicrobial peptides distinct from and shorter than cathelicidin LL-37. These peptides show enhanced antimicrobial action, acquiring the ability to kill skin pathogens such as S.aureus, E.coli and C.albicans. These peptides have lost the ability to stimulate CXCL8/IL8 release from keratinocytes. The peptides act synergistically, killing bacteria at lower concentrations when present together, and maintain activity at increased salt condition.

Its subcellular location is the secreted. It is found in the vesicle. In terms of biological role, antimicrobial protein that is an integral component of the innate immune system. Binds to bacterial lipopolysaccharides (LPS). Acts via neutrophil N-formyl peptide receptors to enhance the release of CXCL2. Postsecretory processing generates multiple cathelicidin antimicrobial peptides with various lengths which act as a topical antimicrobial defense in sweat on skin. The unprocessed precursor form, cathelicidin antimicrobial peptide, inhibits the growth of Gram-negative E.coli and E.aerogenes with efficiencies comparable to that of the mature peptide LL-37 (in vitro). Functionally, antimicrobial peptide that is an integral component of the innate immune system. Binds to bacterial lipopolysaccharides (LPS). Causes membrane permeabilization by forming transmembrane pores (in vitro). Causes lysis of E.coli. Exhibits antimicrobial activity against Gram-negative bacteria such as P.aeruginosa, S.typhimurium, E.aerogenes, E.coli and P.syringae, Gram-positive bacteria such as L.monocytogenes, S.epidermidis, S.pyogenes and S.aureus, as well as vancomycin-resistant enterococci (in vitro). Exhibits antimicrobial activity against methicillin-resistant S.aureus, P.mirabilis, and C.albicans in low-salt media, but not in media containing 100 mM NaCl (in vitro). Forms chiral supramolecular assemblies with quinolone signal (PQS) molecules of P.aeruginosa, which may lead to interference of bacterial quorum signaling and perturbance of bacterial biofilm formation. May form supramolecular fiber-like assemblies on bacterial membranes. Induces cytokine and chemokine producation as well as TNF/TNFA and CSF2/GMCSF production in normal human keratinocytes. Exhibits hemolytic activity against red blood cells. Its function is as follows. Exhibits antimicrobial activity against E.coli and B.megaterium (in vitro). In Saguinus oedipus (Cotton-top tamarin), this protein is Cathelicidin antimicrobial peptide.